The sequence spans 251 residues: Putative ATP-binding protein Rv3427c in insertion sequence (251 aa).

108-115 provides a ligand contact to ATP; it reads GPVGVGKT.

The protein belongs to the IS21/IS1162 putative ATP-binding protein family.

This is Putative ATP-binding protein Rv3427c in insertion sequence from Mycobacterium tuberculosis (strain ATCC 25618 / H37Rv).